Consider the following 1906-residue polypeptide: MQSFRERCGFHGKQQNYQQTSQETSRLENYRQPSQAGLSCDRQRLLAKDYYNPQPYPSYEGGAGTPSGTAAAVAADKYHRGSKALPTQQGLQGRPAFPGYGVQDSSPYPGRYAGEESLQAWGAPQPPPPQPQPLPAGVAKYDENLMKKTAVPPSRQYAEQGAQVPFRTHSLHVQQPPPPQQPLAYPKLQRQKLQNDIASPLPFPQGTHFPQHSQSFPTSSTYSSSVQGGGQGAHSYKSCTAPTAQPHDRPLTASSSLAPGQRVQNLHAYQSGRLSYDQQQQQQQQQQQQQQALQSRHHAQETLHYQNLAKYQHYGQQGQGYCQPDAAVRTPEQYYQTFSPSSSHSPARSVGRSPSYSSTPSPLMPNLENFPYSQQPLSTGAFPAGITDHSHFMPLLNPSPTDATSSVDTQAGNCKPLQKDKLPENLLSDLSLQSLTALTSQVENISNTVQQLLLSKAAVPQKKGVKNLVSRTPEQHKSQHCSPEGSGYSAEPAGTPLSEPPSSTPQSTHAEPQEADYLSGSEDPLERSFLYCNQARGSPARVNSNSKAKPESVSTCSVTSPDDMSTKSDDSFQSLHGSLPLDSFSKFVAGERDCPRLLLSALAQEDLASEILGLQEAIGEKADKAWAEAPSLVKDSSKPPFSLENHSACLDSVAKSAWPRPGEPEALPDSLQLDKGGNAKDFSPGLFEDPSVAFATPDPKKTTGPLSFGTKPTLGVPAPDPTTAAFDCFPDTTAASSADSANPFAWPEENLGDACPRWGLHPGELTKGLEQGGKASDGISKGDTHEASACLGFQEEDPPGEKVASLPGDFKQEEVGGVKEEAGGLLQCPEVAKADRWLEDSRHCCSTADFGDLPLLPPTSRKEDLEAEEEYSSLCELLGSPEQRPGMQDPLSPKAPLICTKEEVEEVLDSKAGWGSPCHLSGESVILLGPTVGTESKVQSWFESSLSHMKPGEEGPDGERAPGDSTTSDASLAQKPNKPAVPEAPIAKKEPVPRGKSLRSRRVHRGLPEAEDSPCRAPVLPKDLLLPESCTGPPQGQMEGAGAPGRGASEGLPRMCTRSLTALSEPRTPGPPGLTTTPAPPDKLGGKQRAAFKSGKRVGKPSPKAASSPSNPAALPVASDSSPMGSKTKETDSPSTPGKDQRSMILRSRTKTQEIFHSKRRRPSEGRLPNCRATKKLLDNSHLPATFKVSSSPQKEGRVSQRARVPKPGAGSKLSDRPLHALKRKSAFMAPVPTKKRNLVLRSRSSSSSNASGNGGDGKEERPEGSPTLFKRMSSPKKAKPTKGNGEPATKLPPPETPDACLKLASRAAFQGAMKTKVLPPRKGRGLKLEAIVQKITSPSLKKFACKAPGASPGNPLSPSLSDKDRGLKGAGGSPVGVEEGLVNVGTGQKLPTSGADPLCRNPTNRSLKGKLMNSKKLSSTDCFKTEAFTSPEALQPGGTALAPKKRSRKGRAGAHGLSKGPLEKRPYLGPALLLTPRDRASGTQGASEDNSGGGGKKPKMEELGLASQPPEGRPCQPQTRAQKQPGHTNYSSYSKRKRLTRGRAKNTTSSPCKGRAKRRRQQQVLPLDPAEPEIRLKYISSCKRLRSDSRTPAFSPFVRVEKRDAFTTICTVVNSPGDAPKPHRKPSSSASSSSSSSSFSLDAAGASLATLPGGSILQPRPSLPLSSTMHLGPVVSKALSTSCLVCCLCQNPANFKDLGDLCGPYYPEHCLPKKKPKLKEKVRPEGTCEEASLPLERTLKGPECAAAATAGKPPRPDGPADPAKQGPLRTSARGLSRRLQSCYCCDGREDGGEEAAPADKGRKHECSKEAPAEPGGEAQEHWVHEACAVWTGGVYLVAGKLFGLQEAMKVAVDMMCSSCQEAGATIGCCHKGCLHTYHYPCASDAGCIFIEENFSLKCPKHKRLP.

Disordered stretches follow at residues 1–261, 273–299, 335–370, 469–520, 538–571, and 656–712; these read MQSF…APGQ, RLSY…RHHA, YQTF…LENF, VSRT…YLSG, SPAR…SDDS, and SAWP…GTKP. A compositionally biased stretch (polar residues) spans 13-24; the sequence is KQQNYQQTSQET. Over residues 66–75 the composition is skewed to low complexity; the sequence is PSGTAAAVAA. The span at 124-134 shows a compositional bias: pro residues; the sequence is PQPPPPQPQPL. The segment covering 213 to 226 has biased composition (low complexity); it reads SQSFPTSSTYSSSV. Polar residues predominate over residues 252–261; it reads TASSSLAPGQ. 2 stretches are compositionally biased toward low complexity: residues 278–291 and 339–353; these read QQQQ…QQQQ and SPSS…VGRS. Phosphoserine is present on residues Ser339 and Ser345. Thr472 carries the post-translational modification Phosphothreonine. The span at 541-563 shows a compositional bias: polar residues; the sequence is RVNSNSKAKPESVSTCSVTSPDD. Phosphoserine is present on residues Ser568 and Ser683. At Thr696 the chain carries Phosphothreonine. Ser805 carries the post-translational modification Phosphoserine. Residue Lys811 forms a Glycyl lysine isopeptide (Lys-Gly) (interchain with G-Cter in SUMO2) linkage. Residue Lys819 forms a Glycyl lysine isopeptide (Lys-Gly) (interchain with G-Cter in SUMO1) linkage. Phosphoserine is present on residues Ser880 and Ser892. Lys901 is covalently cross-linked (Glycyl lysine isopeptide (Lys-Gly) (interchain with G-Cter in SUMO1); alternate). Lys901 is covalently cross-linked (Glycyl lysine isopeptide (Lys-Gly) (interchain with G-Cter in SUMO2); alternate). Residues 937 to 947 show a composition bias toward polar residues; the sequence is KVQSWFESSLS. Disordered stretches follow at residues 937 to 1299, 1344 to 1570, 1613 to 1637, 1746 to 1775, and 1794 to 1819; these read KVQS…ETPD, FACK…PLDP, VVNS…SSSS, AAAA…SARG, and EEAA…GGEA. The span at 950-962 shows a compositional bias: basic and acidic residues; it reads KPGEEGPDGERAP. Over residues 996-1005 the composition is skewed to basic residues; the sequence is KSLRSRRVHR. Ser1064 is modified (phosphoserine). Thr1068 is subject to Phosphothreonine. Over residues 1101–1119 the composition is skewed to low complexity; that stretch reads PSPKAASSPSNPAALPVAS. Phosphoserine is present on Ser1122. Short sequence motifs (nuclear localization signal) lie at residues 1160–1177 and 1223–1240; these read RRRP…TKKL and KRKS…RNLV. A compositionally biased stretch (low complexity) spans 1242–1252; that stretch reads RSRSSSSSNAS. A phosphoserine mark is found at Ser1352, Ser1358, and Ser1374. A Glycyl lysine isopeptide (Lys-Gly) (interchain with G-Cter in SUMO2) cross-link involves residue Lys1425. Ser1431 is modified (phosphoserine). The span at 1444–1453 shows a compositional bias: basic residues; that stretch reads PKKRSRKGRA. Polar residues-rich tracts occupy residues 1482–1491 and 1517–1534; these read SGTQGASEDN and QPQT…YSSY. Positions 1535 to 1545 are enriched in basic residues; it reads SKRKRLTRGRA. Residues 1628–1637 show a composition bias toward low complexity; the sequence is SSSASSSSSS. The segment at 1780–1835 adopts a C2HC pre-PHD-type zinc-finger fold; the sequence is LQSCYCCDGREDGGEEAAPADKGRKHECSKEAPAEPGGEAQEHWVHEACAVWTGGV. Residues 1798-1812 are compositionally biased toward basic and acidic residues; the sequence is PADKGRKHECSKEAP. The PHD-type zinc finger occupies 1855-1903; that stretch reads MMCSSCQEAGATIGCCHKGCLHTYHYPCASDAGCIFIEENFSLKCPKHK.

As to expression, expressed in all tissues examined with higher expression in the heart and brain. No expression was seen in the corpus callosum of the brain.

It is found in the cytoplasm. It localises to the nucleus. In terms of biological role, transcriptional regulator of the circadian clock components: CLOCK, BMAL1, BMAL2, PER1/3, CRY1/2, NR1D1/2 and RORA/C. Positively regulates the transcriptional activity of CLOCK a core component of the circadian clock. Regulates transcription through chromatin remodeling by interacting with other proteins in chromatin as well as proteins in the basic transcriptional machinery. May be important for embryonic and postnatal development. May be involved in neuronal differentiation. This chain is Retinoic acid-induced protein 1 (RAI1), found in Homo sapiens (Human).